We begin with the raw amino-acid sequence, 305 residues long: Large ribosomal subunit protein uL3c (305 aa).

The transit peptide at 1–84 (MAAILPTFSI…AVGGLEIKMM (84 aa)) directs the protein to the chloroplast. A disordered region spans residues 228 to 256 (SHRALGSIGAGTTPGHVYKGKKMPGRMGG).

As to quaternary structure, component of the chloroplast large ribosomal subunit (LSU). Mature 70S chloroplast ribosomes of higher plants consist of a small (30S) and a large (50S) subunit. The 30S small subunit contains 1 molecule of ribosomal RNA (16S rRNA) and 24 different proteins. The 50S large subunit contains 3 rRNA molecules (23S, 5S and 4.5S rRNA) and 33 different proteins.

It is found in the plastid. Its subcellular location is the chloroplast. In terms of biological role, component of the chloroplast ribosome (chloro-ribosome), a dedicated translation machinery responsible for the synthesis of chloroplast genome-encoded proteins, including proteins of the transcription and translation machinery and components of the photosynthetic apparatus. This is Large ribosomal subunit protein uL3c (RPL3) from Spinacia oleracea (Spinach).